The following is a 311-amino-acid chain: R2-like ligand binding oxidase (311 aa).

E68, E101, and H104 together coordinate Mn(2+). Residues 71–162 (VTQDIQPFMA…AAQVRASVTY (92 aa)) constitute a cross-link (3-(O4'-tyrosyl)-valine (Val-Tyr)). E101 provides a ligand contact to Fe cation. Fe cation is bound by residues E167, E202, and H205.

This sequence belongs to the ribonucleoside diphosphate reductase small chain family. R2-like ligand binding oxidase subfamily. As to quaternary structure, homodimer. It depends on Fe cation as a cofactor. Mn(2+) serves as cofactor.

Functionally, probable oxidase that might be involved in lipid metabolism. In Mycolicibacterium paratuberculosis (strain ATCC BAA-968 / K-10) (Mycobacterium paratuberculosis), this protein is R2-like ligand binding oxidase.